The sequence spans 150 residues: Large ribosomal subunit protein bL9 (150 aa).

It belongs to the bacterial ribosomal protein bL9 family.

In terms of biological role, binds to the 23S rRNA. This Shewanella woodyi (strain ATCC 51908 / MS32) protein is Large ribosomal subunit protein bL9.